The primary structure comprises 483 residues: V-type proton ATPase subunit B 2 (483 aa).

Belongs to the ATPase alpha/beta chains family. V-ATPase is a heteromultimeric enzyme composed of a peripheral catalytic V1 complex (main components: subunits A, B, C, D, E, and F) attached to an integral membrane V0 proton pore complex (main component: the proteolipid protein).

Non-catalytic subunit of the peripheral V1 complex of vacuolar ATPase. V-ATPase is responsible for acidifying a variety of intracellular compartments in eukaryotic cells. The sequence is that of V-type proton ATPase subunit B 2 from Hordeum vulgare (Barley).